Consider the following 294-residue polypeptide: Ventral anterior homeobox 2b (294 aa).

Residues 1–10 (MGDGVSEERS) show a composition bias toward basic and acidic residues. 5 disordered regions span residues 1–27 (MGDG…VRDR), 43–65 (KDIP…DSQS), 149–168 (RRTK…SSST), 190–223 (PAPP…PVIS), and 272–294 (SSAF…KSTS). The segment at residues 98 to 157 (PKRTRTSFTAEQLYRLELEFQRCQYVVGRERTELARQLNLSETQVKVWFQNRRTKQKKDQ) is a DNA-binding region (homeobox). The segment covering 154-165 (KKDQSRDSEKRS) has biased composition (basic and acidic residues). Over residues 197 to 219 (SSQNNMGTSSGNGTSLGTSGSTS) the composition is skewed to low complexity. Residues 279–288 (TRLDRKDTAS) show a composition bias toward basic and acidic residues.

It belongs to the EMX homeobox family.

The protein localises to the nucleus. In terms of biological role, transcription factor that may function in dorsoventral specification of the forebrain. Regulates the expression of Wnt signaling antagonists. In Xenopus laevis (African clawed frog), this protein is Ventral anterior homeobox 2b (vax2-b).